The chain runs to 164 residues: Thiol peroxidase (164 aa).

The Thioredoxin domain maps to 18–164; sequence KKVGDSAPDF…YEAVLSHLNK (147 aa). Residue Cys-60 is the Cysteine sulfenic acid (-SOH) intermediate of the active site. Cys-60 and Cys-94 form a disulfide bridge.

The protein belongs to the peroxiredoxin family. Tpx subfamily. In terms of assembly, homodimer.

It carries out the reaction a hydroperoxide + [thioredoxin]-dithiol = an alcohol + [thioredoxin]-disulfide + H2O. Functionally, thiol-specific peroxidase that catalyzes the reduction of hydrogen peroxide and organic hydroperoxides to water and alcohols, respectively. Plays a role in cell protection against oxidative stress by detoxifying peroxides. The chain is Thiol peroxidase from Oceanobacillus iheyensis (strain DSM 14371 / CIP 107618 / JCM 11309 / KCTC 3954 / HTE831).